The primary structure comprises 1142 residues: MSKFCLCLSLLGVLLLQVCDTRSLLELKIECPHTVGLGQGLVIGTVDLNPVPVESVSTLKLESSCNFDVHTSSATQQAVTKWTWEKKADTAETAKAASTTFQSKSTELNLRGLCVIPTLVLETANKLRKTVTCYDLSCNQTACIPTVYLIAPIHTCVTTKSCLLGLGTQRIQVTYEKTYCVSGQLVEGTCFNPIHTMALSQPSHTYDIVTIPVRCFFIAKKTNDDTLKIEKQFETILEKSGCTAANIKGYYVCFLGATSEPIFVPTMDDFRASQILSDMAISPHGEDHDSALSSVSTFRIAGKLSGKAPSTESSDTVQGVAFSGHPLYTSLSVLASKEDPVYIWSPGIIPERNHTVCDKKTLPLTWTGYLPLPGGIEKTTQCTIFCTLAGPGADCEAYSDTGIFNISSPTCLINRVQRFRGAEQQIKFVCQRVDLDIVVYCNGMKKVILTKTLVIGQCIYTFTSVFSLMPGIAHSLAVELCVPGIHGWSTIALLATFCFGWLLIPIISLVSIKIMLLFAYMCSKYSNDSKFRLLIEKVKQEYQKTMGSMVCEVCQQECEMAKELESHKKSCPNGMCPYCMNPTESTESALQAHFKVCKLTTRFQENLRKSLNPYEPKRGCYRTLSVFRYRSRCFVGLVWCILLVLELVIWAASADTVEIKTGWTDTAHGAGVIPLKSDLELDFSLPSSATYIYRRDLQNPANEQERIPFHFQLQRQVIHAEIQNLGHWMDGTFNLKTSFHCYGACEKYAYPWQTAKCFLEKDYEFETGWGCNPGDCPGVGTGCTACGVYLDKLRSVGKVFKVISLKFTRRVCIQLGSEQSCKTIDSNDCLMTTSVKVCMIGTVSKFQPGDTLLFLGPLEEGGIIFKQWCTTTCHFGDPGDIMSTPQGMQCPEHTGAFRKKCAFATMPTCEYDGNTLSGYQRMLATRDSFQSFNITEPHITSNSLEWVDPDSSLKDHINLVVNRDVSFQDLSENPCQVGVAVSSIDGAWGSGVGFNLVCSVSLTECASFLTSIKACDAAMCYGATTANLVRGQNTVHILGKGGHSGSKFMCCHSTECSSTGLTAAAPHLDRVTGYNVIDNDKVFDDGSPECGVHCWFKKSGEWLMGILSGNWMVVAVLVVLLILSIFLFSLCCPRRVVHKKSS.

A signal peptide spans 1-21 (MSKFCLCLSLLGVLLLQVCDT). The Lumenal portion of the chain corresponds to 22-489 (RSLLELKIEC…LCVPGIHGWS (468 aa)). 6 disulfide bridges follow: C31-C156, C65-C162, C114-C133, C138-C143, C180-C190, and C215-C253. N139 is a glycosylation site (N-linked (GlcNAc...) asparagine; by host). N353 carries an N-linked (GlcNAc...) asparagine; by host glycan. 4 cysteine pairs are disulfide-bonded: C382-C441, C386-C395, C411-C430, and C458-C481. An N-linked (GlcNAc...) asparagine; by host glycan is attached at N405. Residues 490–510 (TIALLATFCFGWLLIPIISLV) traverse the membrane as a helical segment. Residues 511-633 (SIKIMLLFAY…LSVFRYRSRC (123 aa)) are Cytoplasmic-facing. The tract at residues 522–539 (CSKYSNDSKFRLLIEKVK) is binding to the ribonucleoprotein. 2 consecutive CCHC-type zinc fingers follow at residues 551–571 (CEVC…KKSC) and 576–597 (CPYC…FKVC). Binding to the ribonucleoprotein regions lie at residues 594–611 (FKVC…RKSL), 598–609 (KLTTRFQENLRK), and 617–631 (KRGC…RYRS). An ITAM domain is found at 617–640 (KRGCYRTLSVFRYRSRCFVGLVWC). Positions 621 to 624 (YRTL) match the YxxL motif. The helical transmembrane segment at 634–654 (FVGLVWCILLVLELVIWAASA) threads the bilayer. The Lumenal segment spans residues 655 to 1110 (DTVEIKTGWT…EWLMGILSGN (456 aa)). Disulfide bonds link C741–C776, C745–C783, C757–C890, C771–C901, C786–C909, C812–C821, C829–C838, and C869–C873. Positions 763 to 783 (YEFETGWGCNPGDCPGVGTGC) are fusion loop. N933 is a glycosylation site (N-linked (GlcNAc...) asparagine; by host). Intrachain disulfides connect C975-C1005, C998-C1050, C1015-C1020, C1051-C1056, and C1090-C1094. A helical transmembrane segment spans residues 1111–1131 (WMVVAVLVVLLILSIFLFSLC). The tract at residues 1127–1142 (LFSLCCPRRVVHKKSS) is binding to the ribonucleoprotein. Residues 1132-1142 (CPRRVVHKKSS) lie on the Cytoplasmic side of the membrane.

It belongs to the hantavirus envelope glycoprotein family. As to quaternary structure, homodimer. Homotetramer; forms heterotetrameric Gn-Gc spikes in the pre-fusion conformation. Interacts (via C-terminus) with the nucleoprotein. Interacts with host TUFM; this interaction contributes to the virus-induced degradation of mitochondria by autophagy, which leads to degradation of host MAVS and inhibition of type I interferon (IFN) responses. Interacts with host MAP1LC3B; this interaction contributes to the virus-induced degradation of mitochondria by autophagy, which leads to degradation of host MAVS and inhibition of type I interferon (IFN) responses. Homodimer. Homotetramer; forms heterotetrameric Gn-Gc spikes in the pre-fusion conformation. Homotrimer; forms homotrimer in the post-fusion conformation at acidic pH. Interacts (via C-terminus) with the nucleoprotein. Envelope polyprotein precursor is quickly cleaved in vivo just after synthesis, presumably by host signal peptidase.

It localises to the virion membrane. It is found in the host cell surface. The protein localises to the host Golgi apparatus membrane. Its subcellular location is the host endoplasmic reticulum membrane. The protein resides in the host mitochondrion. In terms of biological role, forms homotetramers with glycoprotein C at the surface of the virion. Attaches the virion to host cell receptors including integrin alpha5/ITGB1. This attachment induces virion internalization predominantly through clathrin-dependent endocytosis. Mediates the assembly and budding of infectious virus particles through its interaction with the nucleocapsid protein and the viral genome. May dysregulate normal immune and endothelial cell responses through an ITAM motif. Translocates to mitochondria, binds to host TUFM and recruits MAP1LC3B. These interactions induce mitochondrial autophagy and therefore destruction of host MAVS leading to inhibition of type I interferon (IFN) responses. Concomitant breakdown of glycoprotein N is apparently prevented by the nucleoprotein that may inhibit Gn-stimulated autophagosome-lysosome fusion. Interacts with the viral genomic RNA. Its function is as follows. Forms homotetramers with glycoprotein N at the surface of the virion. Attaches the virion to host cell receptors including integrin ITGAV/ITGB3. This attachment induces virion internalization predominantly through clathrin-dependent endocytosis. Class II fusion protein that promotes fusion of viral membrane with host endosomal membrane after endocytosis of the virion. This Microtus pennsylvanicus (Meadow vole) protein is Envelopment polyprotein (GP).